The chain runs to 230 residues: Cytidylate kinase (230 aa).

12 to 20 (GPSGAGKGT) serves as a coordination point for ATP.

This sequence belongs to the cytidylate kinase family. Type 1 subfamily.

It is found in the cytoplasm. The catalysed reaction is CMP + ATP = CDP + ADP. It carries out the reaction dCMP + ATP = dCDP + ADP. This Shewanella pealeana (strain ATCC 700345 / ANG-SQ1) protein is Cytidylate kinase.